A 145-amino-acid chain; its full sequence is Phospholipase A2 (145 aa).

An N-terminal signal peptide occupies residues 1-15 (MRLLVLAALLTVGAG). At glutamine 16 the chain carries Pyrrolidone carboxylic acid. The propeptide at 16 to 22 (QAGLNSR) is removed by trypsin. Cystine bridges form between cysteine 33/cysteine 99, cysteine 49/cysteine 145, cysteine 51/cysteine 67, cysteine 66/cysteine 127, cysteine 73/cysteine 120, cysteine 83/cysteine 113, and cysteine 106/cysteine 118. Tyrosine 50, glycine 52, and glycine 54 together coordinate Ca(2+). Histidine 70 is an active-site residue. Residue aspartate 71 participates in Ca(2+) binding. Aspartate 121 is a catalytic residue.

The protein belongs to the phospholipase A2 family. In terms of assembly, monomer or homodimer. Ca(2+) is required as a cofactor. In terms of processing, activated by trypsin cleavage in the duodenum. Can also be activated by thrombin or autocatalytically.

Its subcellular location is the secreted. The enzyme catalyses a 1,2-diacyl-sn-glycero-3-phosphocholine + H2O = a 1-acyl-sn-glycero-3-phosphocholine + a fatty acid + H(+). The catalysed reaction is 1,2-ditetradecanoyl-sn-glycero-3-phosphocholine + H2O = 1-tetradecanoyl-sn-glycero-3-phosphocholine + tetradecanoate + H(+). It catalyses the reaction 1,2-dihexadecanoyl-sn-glycero-3-phosphocholine + H2O = 1-hexadecanoyl-sn-glycero-3-phosphocholine + hexadecanoate + H(+). It carries out the reaction 1-hexadecanoyl-2-(9Z-octadecenoyl)-sn-glycero-3-phosphocholine + H2O = 1-hexadecanoyl-sn-glycero-3-phosphocholine + (9Z)-octadecenoate + H(+). The enzyme catalyses 1-hexadecanoyl-2-(5Z,8Z,11Z,14Z-eicosatetraenoyl)-sn-glycero-3-phosphocholine + H2O = 1-hexadecanoyl-sn-glycero-3-phosphocholine + (5Z,8Z,11Z,14Z)-eicosatetraenoate + H(+). The catalysed reaction is 1-hexadecanoyl-2-(9Z-octadecenoyl)-sn-glycero-3-phospho-(1'-sn-glycerol) + H2O = 1-hexadecanoyl-sn-glycero-3-phospho-(1'-sn-glycerol) + (9Z)-octadecenoate + H(+). It catalyses the reaction N-hexadecanoyl-1,2-di-(9Z-octadecenoyl)-sn-glycero-3-phosphoethanolamine + H2O = N-hexadecanoyl-1-(9Z-octadecenoyl)-sn-glycero-3-phosphoethanolamine + (9Z)-octadecenoate + H(+). It carries out the reaction 1-hexadecanoyl-2-(9Z,12Z-octadecadienoyl)-sn-glycero-3-phosphoethanolamine + H2O = 1-hexadecanoyl-sn-glycero-3-phosphoethanolamine + (9Z,12Z)-octadecadienoate + H(+). The enzyme catalyses N,1-dihexadecanoyl-2-(9Z,12Z-octadecadienoyl)-sn-glycero-3-phosphoethanolamine + H2O = N,1-dihexadecanoyl-sn-glycero-3-phosphoethanolamine + (9Z,12Z)-octadecadienoate + H(+). Its function is as follows. Secretory calcium-dependent phospholipase A2 that primarily targets dietary phospholipids in the intestinal tract. Hydrolyzes the ester bond of the fatty acyl group attached at sn-2 position of phospholipids (phospholipase A2 activity) with preference for phosphatidylethanolamines and phosphatidylglycerols over phosphatidylcholines. May play a role in the biosynthesis of N-acyl ethanolamines that regulate energy metabolism and inflammation in the intestinal tract. Hydrolyzes N-acyl phosphatidylethanolamines to N-acyl lysophosphatidylethanolamines, which are further cleaved by a lysophospholipase D to release N-acyl ethanolamines. May act in an autocrine and paracrine manner. Has anti-helminth activity in a process regulated by gut microbiota. Upon helminth infection of intestinal epithelia, directly affects phosphatidylethanolamine contents in the membrane of helminth larvae, likely controlling an array of phospholipid-mediated cellular processes such as membrane fusion and cell division while providing for better immune recognition, ultimately reducing larvae integrity and infectivity. The polypeptide is Phospholipase A2 (PLA2G1B) (Bos taurus (Bovine)).